Reading from the N-terminus, the 354-residue chain is Phenylalanine 4-monooxygenase, chloroplastic (354 aa).

Residues 1-60 (MAFPLQKTFLCSNGQSFPCSNGRSTSTLLASDLKFQRLNKPFILRVGSMQIRNSPKEHPR) constitute a chloroplast transit peptide. Residues histidine 229, histidine 234, and glutamate 274 each coordinate Fe cation.

It belongs to the biopterin-dependent aromatic amino acid hydroxylase family. As to quaternary structure, forms monomers. The cofactor is Fe(2+).

The protein localises to the plastid. Its subcellular location is the chloroplast. It carries out the reaction (6R)-L-erythro-5,6,7,8-tetrahydrobiopterin + L-phenylalanine + O2 = (4aS,6R)-4a-hydroxy-L-erythro-5,6,7,8-tetrahydrobiopterin + L-tyrosine. In terms of biological role, catalyzes the hydroxylation of L-phenylalanine to L-tyrosine. Does not seem to be tetrahydropterin-dependent and shows preference for 10-formyltetrahydrofolate as cosubstrate and electron donor. This Pinus taeda (Loblolly pine) protein is Phenylalanine 4-monooxygenase, chloroplastic.